Reading from the N-terminus, the 126-residue chain is Fatty acid-binding protein 1, liver (126 aa).

The protein belongs to the calycin superfamily. Fatty-acid binding protein (FABP) family.

It is found in the cytoplasm. Its function is as follows. Binds free fatty acids and their coenzyme A derivatives, bilirubin, and some other small molecules in the cytoplasm. May be involved in intracellular lipid transport. The specificity of axolotl L-FABP differs from that of LB-FABP. The polypeptide is Fatty acid-binding protein 1, liver (Ambystoma mexicanum (Axolotl)).